A 378-amino-acid polypeptide reads, in one-letter code: Chlorophyll synthase, chloroplastic (378 aa).

Residues Met-1–Val-45 constitute a chloroplast transit peptide. A run of 7 helical transmembrane segments spans residues Val-173–Ile-193, Phe-199–Pro-219, Phe-232–Thr-252, Ile-257–Phe-277, Trp-302–Thr-322, Tyr-327–Leu-347, and Tyr-357–Ser-377.

Belongs to the UbiA prenyltransferase family. Chlorophyll synthase subfamily. It depends on Mg(2+) as a cofactor. Requires Zn(2+) as cofactor. Mn(2+) is required as a cofactor.

It is found in the plastid. Its subcellular location is the chloroplast membrane. The catalysed reaction is phytyl diphosphate + chlorophyllide a + H(+) = chlorophyll a + diphosphate. With respect to regulation, inhibited by N-phenylmaleimide (NPM) and diacetyl. In terms of biological role, involved in one of the last steps of the biosynthesis of chlorophyll a. Catalyzes the esterification of chlorophillide a with either geranylgeranyldiphosphate (GGPP) or phytyldiphosphate (PhyPP). May also use with a lower efficiency the monophosphates GGMP and PhyMP, but not the non-phosphorylated alcohols geranylgeraniol and phytol. The tetraprenyl diphosphate must bind to the enzyme as the first substrate and esterification occurs when this pre-loaded enzyme meets the second substrate, chlorophyllide. This is Chlorophyll synthase, chloroplastic (CHLG) from Avena sativa (Oat).